A 336-amino-acid polypeptide reads, in one-letter code: Ferredoxin--NADP reductase (336 aa).

Positions 34, 42, 47, 87, 121, 286, and 326 each coordinate FAD.

This sequence belongs to the ferredoxin--NADP reductase type 2 family. As to quaternary structure, homodimer. It depends on FAD as a cofactor.

The enzyme catalyses 2 reduced [2Fe-2S]-[ferredoxin] + NADP(+) + H(+) = 2 oxidized [2Fe-2S]-[ferredoxin] + NADPH. The sequence is that of Ferredoxin--NADP reductase from Leuconostoc mesenteroides subsp. mesenteroides (strain ATCC 8293 / DSM 20343 / BCRC 11652 / CCM 1803 / JCM 6124 / NCDO 523 / NBRC 100496 / NCIMB 8023 / NCTC 12954 / NRRL B-1118 / 37Y).